Here is a 3432-residue protein sequence, read N- to C-terminus: MTKKPGGPGKNRAINMLKRGLPRVFPLVGVKRVVMSLLDGRGPVRFVLALITFFKFTALAPTKALLGRWKAVEKSVAMKHLTSFKRELGTLIDAVNKRGRKQNKRGGNEGSIMWLASLAVVIACAGAMKLSNFQGKLLMTINNTDIADVIVIPTSKGENRCWVRAIDVGYMCEDTITYECPKLTMGNDPEDVDCWCDNQEVYVQYGRCTRTRHSKRSRRSVSVQTHGESSLVNKKEAWLDSTKATRYLMKTENWIIRNPGYAFLAAVLGWMLGSNNGQRVVFTILLLLVAPAYSFNCLGMGNRDFIEGASGATWVDLVLEGDSCLTIMANDKPTLDVRMINIEASQLAEVRSYCYHASVTDISTVARCPTTGEAHNEKRADSSYVCKQGFTDRGWGNGCGLFGKGSIDTCAKFSCTSKAIGRTIQPENIKYEVGIFVHGTTTSENHGNYSAQVGASQAAKFTVTPNAPSITLKLGDYGEVTLDCEPRSGLNTEAFYVMTVGSKSFLVHREWFHDLALPWTSPSSTAWRNRELLMEFEGAHATKQSVVALGSQEGGLHQALAGAIVVEYSSSVKLTSGHLKCRLKMDKLALKGTTYGMCTEKFSFAKNPVDTGHGTVVIELSYSGSDGPCKIPIVSVASLNDMTPVGRLVTVNPFVATSSANSKVLVEMEPPFGDSYIVVGRGDKQINHHWHKAGSTLGKAFSTTLKGAQRLAALGDTAWDFGSIGGVFNSIGRAVHQVFGGAFRTLFGGMSWITQGLMGALLLWMGVNARDRSIALAFLATGGVLVFLATNVHADTGCAIDITRKEMRCGSGIFVHNDVEAWVDRYKYLPETPRSLAKIVHKAHKEGVCGVRSVTRLEHQMWEAVRDELNVLLKENAVDLSVVVNKPVGRYRSAPKRLSMTQEKFEMGWKAWGKSILFAPELANSTFVVDGPETKECPDEHRAWNSMQIEDFGFGITSTRVWLKIREESTDECDGAIIGTAVKGHVAVHSDLSYWIESRYNDTWKLERAVFGEVKSCTWPETHTLWGDDVEESELIIPHTIAGPKSKHNRREGYKTQNQGPWDENGIVLDFDYCPGTKVTITEDCSKRGPSVRTTTDSGKLITDWCCRSCSLPPLRFRTENGCWYGMEIRPVMHDETTLVRSQVDAFKGEMVDPFQLGLLVMFLATQEVLRKRWTARLTIPAVLGVLLVLMLGGITYTDLARYVVLVAAAFAEANSGGDVLHLALIAVFKIQPAFLVMNMLSTRWTNQENVILVLGAAFFQLASVDLQIGVHGILNAAAIAWMIVRAITFPTTSSVTMPVLALLTPGMRALYLDTYRIILLVIGICSLLHERKKTMAKKKGAVLLGLALTSTGWFSPTTIAAGLMVCNPNKKRGWPATEFLSAVGLMFAIVGGLAELDIESMSIPFMLAGLMAVSYVVSGKATDMWLERAADISWEMDAAITGSSRRLDVKLDDDGDFHLIDDPGVPWKVWVLRMSCIGLAALTPWAIVPAAFGYWLTLKTTKRGGVFWDTPSPKPCSKGDTTTGVYRIMARGILGTYQAGVGVMYENVFHTLWHTTRGAAIMSGEGKLTPYWGSVREDRIAYGGPWRFDRKWNGTDDVQVIVVEPGKAAVNIQTKPGVFRTPFGEVGAVSLDYPRGTSGSPILDSNGDIIGLYGNGVELGDGSYVSAIVQGDRQEEPVPEAYTPNMLRKRQMTVLDLHPGSGKTRKILPQIIKDAIQQRLRTAVLAPTRVVAAEMAEALRGLPVRYQTSAVQREHQGNEIVDVMCHATLTHRLMSPNRVPNYNLFVMDEAHFTDPASIAARGYIATKVELGEAAAIFMTATPPGTTDPFPDSNAPIHDLQDEIPDRAWSSGYEWITEYAGKTVWFVASVKMGNEIAMCLQRAGKKVIQLNRKSYDTEYPKCKNGDWDFVITTDISEMGANFGASRVIDCRKSVKPTILEEGEGRVILGNPSPITSASAAQRRGRVGRNPNQVGDEYHYGGATSEDDSNLAHWTEAKIMLDNIHMPNGLVAQLYGPEREKAFTMDGEYRLRGEEKKNFLELLRTADLPVWLAYKVASNGIQYTDRKWCFDGPRTNAILEDNTEVEIVTRMGERKILKPRWLDARVYADHQALKWFKDFAAGKRSAVSFIEVLGRMPEHFMGKTREALDTMYLVATAEKGGKAHRMALEELPDALETITLIVAITVMTGGFFLLMMQRKGIGKMGLGALVLTLATFFLWAAEVPGTKIAGTLLIALLLMVVLIPEPEKQRSQTDNQLAVFLICVLTVVGVVAANEYGMLEKTKADLKSMFGGKTQASGLTGLPSMALDLRPATAWALYGGSTVVLTPLLKHLITSEYVTTSLASINSQAGSLFVLPRGVPFTDLDLTVGLVFLGCWGQITLTTFLTAMVLATLHYGYMLPGWQAEALRAAQRRTAAGIMKNAVVDGMVATDVPELERTTPLMQKKVGQVLLIGVSVAAFLVNPNVTTVREAGVLVTAATLTLWDNGASAVWNSTTATGLCHVMRGSYLAGGSIAWTLIKNADKPSLKRGRPGGRTLGEQWKEKLNAMSREEFFKYRREAIIEVDRTEARRARRENNIVGGHPVSRGSAKLRWLVEKGFVSPIGKVIDLGCGRGGWSYYAATLKKVQEVRGYTKGGAGHEEPMLMQSYGWNLVSLKSGVDVFYKPSEPSDTLFCDIGESSPSPEVEEQRTLRVLEMTSDWLHRGPREFCIKVLCPYMPKVIEKMEVLQRRFGGGLVRLPLSRNSNHEMYWVSGAAGNVVHAVNMTSQVLLGRMDRTVWRGPKYEEDVNLGSGTRAVGKGEVHSNQEKIKKRIQKLKEEFATTWHKDPEHPYRTWTYHGSYEVKATGSASSLVNGVVELMSKPWDAIANVTTMAMTDTTPFGQQRVFKEKVDTKAPEPPAGAKEVLNETTNWLWAHLSREKRPRLCTKEEFIKKVNSNAALGAVFAEQNQWSTAREAVDDPRFWEMVDEERENHLRGECHTCIYNMMGKREKKPGEFGKAKGSRAIWFMWLGARYLEFEALGFLNEDHWLSRENSGGGVEGSGVQKLGYILRDIAGKQGGKMYADDTAGWDTRITRTDLENEAKVLELLDGEHRMLARAIIELTYRHKVVKVMRPAAEGKTVMDVISREDQRGSGQVVTYALNTFTNIAVQLVRLMEAEGVIGPQHLEQLPRKTKIAVRTWLFENGEERVTRMAISGDDCVVKPLDDRFATALHFLNAMSKVRKDIQEWKPSHGWHDWQQVPFCSNHFQEIVMKDGRSIVVPCRGQDELIGRARISPGAGWNVKDTACLAKAYAQMWLLLYFHRRDLRLMANAICSAVPVDWVPTGRTSWSIHSKGEWMTTEDMLQVWNRVWIEENEWMMDKTPITSWTDVPYVGKREDIWCGSLIGTRSRATWAENIYAAINQVRAVIGKENYVDYMTSLRRYEDVLIQEDRVI.

An interaction with host EXOC1 region spans residues 2–15; sequence TKKPGGPGKNRAIN. Residues 2 to 109 are Cytoplasmic-facing; it reads TKKPGGPGKN…RKQNKRGGNE (108 aa). The hydrophobic; homodimerization of capsid protein C stretch occupies residues 37–72; sequence LLDGRGPVRFVLALITFFKFTALAPTKALLGRWKAV. The propeptide at 106–127 is ER anchor for the capsid protein C, removed in mature form by serine protease NS3; the sequence is GGNEGSIMWLASLAVVIACAGA. The helical transmembrane segment at 110-130 threads the bilayer; it reads GSIMWLASLAVVIACAGAMKL. The Extracellular segment spans residues 131–253; sequence SNFQGKLLMT…ATRYLMKTEN (123 aa). The N-linked (GlcNAc...) asparagine; by host glycan is linked to Asn-142. Residues 254-274 traverse the membrane as a helical segment; the sequence is WIIRNPGYAFLAAVLGWMLGS. Topologically, residues 275–279 are cytoplasmic; the sequence is NNGQR. A helical transmembrane segment spans residues 280–294; that stretch reads VVFTILLLLVAPAYS. At 295–746 the chain is on the extracellular side; sequence FNCLGMGNRD…QVFGGAFRTL (452 aa). 6 disulfide bridges follow: Cys-297-Cys-324, Cys-354-Cys-410, Cys-354-Cys-415, Cys-368-Cys-399, Cys-386-Cys-410, and Cys-386-Cys-415. The tract at residues 392–405 is fusion peptide; it reads DRGWGNGCGLFGKG. Asn-448 carries an N-linked (GlcNAc...) asparagine; by host glycan. 2 disulfides stabilise this stretch: Cys-484–Cys-581 and Cys-598–Cys-629. The chain crosses the membrane as a helical span at residues 747 to 767; that stretch reads FGGMSWITQGLMGALLLWMGV. The Cytoplasmic segment spans residues 768–773; that stretch reads NARDRS. Residues 774 to 794 form a helical membrane-spanning segment; the sequence is IALAFLATGGVLVFLATNVHA. Over 795 to 1219 the chain is Extracellular; sequence DTGCAIDITR…AFAEANSGGD (425 aa). Intrachain disulfides connect Cys-798-Cys-809, Cys-849-Cys-937, Cys-973-Cys-1017, Cys-1074-Cys-1123, Cys-1085-Cys-1106, and Cys-1107-Cys-1110. Asn-924 and Asn-1001 each carry an N-linked (GlcNAc...) asparagine; by host glycan. The helical transmembrane segment at 1220–1240 threads the bilayer; that stretch reads VLHLALIAVFKIQPAFLVMNM. Residues 1241–1250 are Cytoplasmic-facing; it reads LSTRWTNQEN. Residues 1251–1271 traverse the membrane as a helical segment; it reads VILVLGAAFFQLASVDLQIGV. Position 1272 (His-1272) is a topological domain, lumenal. A helical membrane pass occupies residues 1273–1293; it reads GILNAAAIAWMIVRAITFPTT. Residues 1294-1309 lie on the Cytoplasmic side of the membrane; it reads SSVTMPVLALLTPGMR. Residues 1310-1330 form a helical membrane-spanning segment; that stretch reads ALYLDTYRIILLVIGICSLLH. Residues 1331-1341 lie on the Lumenal side of the membrane; that stretch reads ERKKTMAKKKG. A helical transmembrane segment spans residues 1342 to 1362; sequence AVLLGLALTSTGWFSPTTIAA. Residues 1363 to 1374 are Cytoplasmic-facing; it reads GLMVCNPNKKRG. 2 interaction with human SPCS1 regions span residues 1374 to 1423 and 1458 to 1505; these read GWPA…GKAT and FHLI…TKRG. A helical membrane pass occupies residues 1375–1395; it reads WPATEFLSAVGLMFAIVGGLA. Residues 1396-1398 are Lumenal-facing; the sequence is ELD. A helical transmembrane segment spans residues 1399 to 1419; that stretch reads IESMSIPFMLAGLMAVSYVVS. At 1420-1476 the chain is on the cytoplasmic side; the sequence is GKATDMWLERAADISWEMDAAITGSSRRLDVKLDDDGDFHLIDDPGVPWKVWVLRMS. The tract at residues 1427-1466 is interacts with and activates NS3 protease; that stretch reads LERAADISWEMDAAITGSSRRLDVKLDDDGDFHLIDDPGV. The helical intramembrane region spans 1477 to 1497; sequence CIGLAALTPWAIVPAAFGYWL. Topologically, residues 1498–2173 are cytoplasmic; sequence TLKTTKRGGV…RMALEELPDA (676 aa). Residues 1505-1682 enclose the Peptidase S7 domain; it reads GGVFWDTPSP…DRQEEPVPEA (178 aa). Active-site charge relay system; for serine protease NS3 activity residues include His-1555, Asp-1579, and Ser-1639. One can recognise a Helicase ATP-binding domain in the interval 1685–1841; that stretch reads PNMLRKRQMT…DSNAPIHDLQ (157 aa). The interval 1689 to 1692 is important for RNA-binding; the sequence is RKRQ. 1698–1705 contributes to the ATP binding site; the sequence is LHPGSGKT. Residues 1789–1792 carry the DEAH box motif; the sequence is DEAH. Positions 1852-2017 constitute a Helicase C-terminal domain; it reads GYEWITEYAG…GLVAQLYGPE (166 aa). Lys-1893 carries the post-translational modification N6-acetyllysine; by host. The segment at 1950-1972 is disordered; sequence NPSPITSASAAQRRGRVGRNPNQ. Residues 2168–2172 form a regulates the ATPase activity of NS3 helicase region; it reads EELPD. Residues 2174 to 2194 traverse the membrane as a helical segment; that stretch reads LETITLIVAITVMTGGFFLLM. Over 2195-2199 the chain is Lumenal; that stretch reads MQRKG. An intramembrane region (helical) is located at residues 2200–2220; it reads IGKMGLGALVLTLATFFLWAA. Residue Glu-2221 is a topological domain, lumenal. A helical transmembrane segment spans residues 2222-2242; sequence VPGTKIAGTLLIALLLMVVLI. At 2243–2257 the chain is on the cytoplasmic side; sequence PEPEKQRSQTDNQLA. A helical transmembrane segment spans residues 2258 to 2278; sequence VFLICVLTVVGVVAANEYGML. The Lumenal portion of the chain corresponds to 2279–2311; the sequence is EKTKADLKSMFGGKTQASGLTGLPSMALDLRPA. An intramembrane region (helical) is located at residues 2312–2332; that stretch reads TAWALYGGSTVVLTPLLKHLI. At 2333-2368 the chain is on the lumenal side; the sequence is TSEYVTTSLASINSQAGSLFVLPRGVPFTDLDLTVG. The chain crosses the membrane as a helical span at residues 2369-2389; it reads LVFLGCWGQITLTTFLTAMVL. Residues 2390-2444 are Cytoplasmic-facing; that stretch reads ATLHYGYMLPGWQAEALRAAQRRTAAGIMKNAVVDGMVATDVPELERTTPLMQKK. A helical transmembrane segment spans residues 2445–2465; the sequence is VGQVLLIGVSVAAFLVNPNVT. Residues 2466–2469 are Lumenal-facing; that stretch reads TVRE. The chain crosses the membrane as a helical span at residues 2470–2490; the sequence is AGVLVTAATLTLWDNGASAVW. Topologically, residues 2491-3432 are cytoplasmic; that stretch reads NSTTATGLCH…DVLIQEDRVI (942 aa). The region spanning 2528 to 2793 is the mRNA cap 0-1 NS5-type MT domain; the sequence is GRPGGRTLGE…DVNLGSGTRA (266 aa). Ser-2583 serves as a coordination point for S-adenosyl-L-methionine. Position 2583 is a phosphoserine (Ser-2583). The active-site For 2'-O-MTase activity is the Lys-2588. Gly-2613, Trp-2614, Thr-2631, Lys-2632, Asp-2658, and Val-2659 together coordinate S-adenosyl-L-methionine. Asp-2673 serves as the catalytic For 2'-O-MTase activity. Residue Ile-2674 coordinates S-adenosyl-L-methionine. Residues Lys-2709 and Glu-2745 each act as for 2'-O-MTase activity in the active site. Residue Tyr-2747 coordinates S-adenosyl-L-methionine. 4 residues coordinate Zn(2+): Glu-2967, His-2971, Cys-2976, and Cys-2979. Positions 3057–3209 constitute a RdRp catalytic domain; sequence GKMYADDTAG…KPLDDRFATA (153 aa). His-3244, Cys-3260, and Cys-3379 together coordinate Zn(2+).

The protein in the N-terminal section; belongs to the class I-like SAM-binding methyltransferase superfamily. mRNA cap 0-1 NS5-type methyltransferase family. In terms of assembly, homodimer. Interacts (via N-terminus) with host EXOC1 (via C-terminus); this interaction results in EXOC1 degradation through the proteasome degradation pathway. As to quaternary structure, forms heterodimers with envelope protein E in the endoplasmic reticulum and Golgi. Homodimer; in the endoplasmic reticulum and Golgi. Interacts with protein prM. Interacts with non-structural protein 1. Interacts with host HSPA5. In terms of assembly, homodimer; Homohexamer when secreted. Interacts with envelope protein E. NS1 interacts with NS4B. Interacts with host complement protein CFH; this interaction leads to the degradation of C3. As to quaternary structure, interacts (via N-terminus) with serine protease NS3. Forms a heterodimer with serine protease NS3. May form homooligomers. Interacts with human SPCS1. In terms of assembly, forms a heterodimer with NS2B. Interacts with non-structural protein 2A (via N-terminus). Interacts with NS4B. Interacts with unphosphorylated RNA-directed RNA polymerase NS5; this interaction stimulates RNA-directed RNA polymerase NS5 guanylyltransferase activity. Interacts with host ILF2. As to quaternary structure, interacts with serine protease NS3. Homodimer. Interacts with host STAT2; this interaction inhibits the phosphorylation of the latter, and, when all viral proteins are present (polyprotein), targets STAT2 for degradation. Interacts with serine protease NS3. Mn(2+) is required as a cofactor. It depends on Mg(2+) as a cofactor. Specific enzymatic cleavages in vivo yield mature proteins. Cleavages in the lumen of endoplasmic reticulum are performed by host signal peptidase, whereas cleavages in the cytoplasmic side are performed by serine protease NS3. Signal cleavage at the 2K-4B site requires a prior NS3 protease-mediated cleavage at the 4A-2K site. In terms of processing, cleaved in post-Golgi vesicles by a host furin, releasing the mature small envelope protein M, and peptide pr. This cleavage is incomplete as up to 30% of viral particles still carry uncleaved prM. Post-translationally, N-glycosylated. N-glycosylated. The excreted form is glycosylated and this is required for efficient secretion of the protein from infected cells. In terms of processing, acetylated by host KAT5. Acetylation modulates NS3 RNA-binding and unwinding activities and plays an important positive role for viral replication. Post-translationally, phosphorylated on serines residues. This phosphorylation may trigger NS5 nuclear localization.

The protein resides in the host endoplasmic reticulum membrane. It is found in the virion. The protein localises to the host nucleus. Its subcellular location is the host cytoplasm. It localises to the host perinuclear region. The protein resides in the secreted. It is found in the virion membrane. The protein localises to the host cell surface. The catalysed reaction is Selective hydrolysis of -Xaa-Xaa-|-Yaa- bonds in which each of the Xaa can be either Arg or Lys and Yaa can be either Ser or Ala.. The enzyme catalyses RNA(n) + a ribonucleoside 5'-triphosphate = RNA(n+1) + diphosphate. It catalyses the reaction a ribonucleoside 5'-triphosphate + H2O = a ribonucleoside 5'-diphosphate + phosphate + H(+). It carries out the reaction ATP + H2O = ADP + phosphate + H(+). The catalysed reaction is a 5'-end (5'-triphosphoguanosine)-ribonucleoside in mRNA + S-adenosyl-L-methionine = a 5'-end (N(7)-methyl 5'-triphosphoguanosine)-ribonucleoside in mRNA + S-adenosyl-L-homocysteine. The enzyme catalyses a 5'-end (N(7)-methyl 5'-triphosphoguanosine)-ribonucleoside in mRNA + S-adenosyl-L-methionine = a 5'-end (N(7)-methyl 5'-triphosphoguanosine)-(2'-O-methyl-ribonucleoside) in mRNA + S-adenosyl-L-homocysteine + H(+). Functionally, plays a role in virus budding by binding to the cell membrane and gathering the viral RNA into a nucleocapsid that forms the core of a mature virus particle. During virus entry, may induce genome penetration into the host cytoplasm after hemifusion induced by the surface proteins. Can migrate to the cell nucleus where it modulates host functions. Overcomes the anti-viral effects of host EXOC1 by sequestering and degrading the latter through the proteasome degradation pathway. Inhibits RNA silencing by interfering with host Dicer. In terms of biological role, prevents premature fusion activity of envelope proteins in trans-Golgi by binding to envelope protein E at pH 6.0. After virion release in extracellular space, gets dissociated from E dimers. Its function is as follows. Acts as a chaperone for envelope protein E during intracellular virion assembly by masking and inactivating envelope protein E fusion peptide. prM is the only viral peptide matured by host furin in the trans-Golgi network probably to avoid catastrophic activation of the viral fusion activity in acidic Golgi compartment prior to virion release. prM-E cleavage is inefficient, and many virions are only partially matured. These uncleaved prM would play a role in immune evasion. Functionally, may play a role in virus budding. Exerts cytotoxic effects by activating a mitochondrial apoptotic pathway through M ectodomain. May display a viroporin activity. Binds to host cell surface receptor and mediates fusion between viral and cellular membranes. Efficient virus attachment to cell is, at least in part, mediated by host HSPA5. Envelope protein is synthesized in the endoplasmic reticulum in the form of heterodimer with protein prM. They play a role in virion budding in the ER, and the newly formed immature particle is covered with 60 spikes composed of heterodimer between precursor prM and envelope protein E. The virion is transported to the Golgi apparatus where the low pH causes dissociation of PrM-E heterodimers and formation of E homodimers. prM-E cleavage is inefficient, and many virions are only partially matured. These uncleaved prM would play a role in immune evasion. In terms of biological role, involved in immune evasion, pathogenesis and viral replication. Once cleaved off the polyprotein, is targeted to three destinations: the viral replication cycle, the plasma membrane and the extracellular compartment. Essential for viral replication. Required for formation of the replication complex and recruitment of other non-structural proteins to the ER-derived membrane structures. Excreted as a hexameric lipoparticle that plays a role against host immune response. Antagonizing the complement function. Binds to the host macrophages and dendritic cells. Inhibits signal transduction originating from Toll-like receptor 3 (TLR3). Its function is as follows. Component of the viral RNA replication complex that functions in virion assembly and antagonizes the host alpha/beta interferon antiviral response. Functionally, required cofactor for the serine protease function of NS3. May have membrane-destabilizing activity and form viroporins. Displays three enzymatic activities: serine protease, NTPase and RNA helicase. NS3 serine protease, in association with NS2B, performs its autocleavage and cleaves the polyprotein at dibasic sites in the cytoplasm: C-prM, NS2A-NS2B, NS2B-NS3, NS3-NS4A, NS4A-2K and NS4B-NS5. NS3 RNA helicase binds RNA and unwinds dsRNA in the 3' to 5' direction. In terms of biological role, regulates the ATPase activity of the NS3 helicase activity. NS4A allows NS3 helicase to conserve energy during unwinding. Its function is as follows. Functions as a signal peptide for NS4B and is required for the interferon antagonism activity of the latter. Functionally, induces the formation of ER-derived membrane vesicles where the viral replication takes place. Inhibits interferon (IFN)-induced host STAT1 phosphorylation and nuclear translocation, thereby preventing the establishment of cellular antiviral state by blocking the IFN-alpha/beta pathway. Inhibits STAT2 translocation in the nucleus after IFN-alpha treatment. Replicates the viral (+) and (-) RNA genome. Performs the capping of genomes in the cytoplasm. NS5 methylates viral RNA cap at guanine N-7 and ribose 2'-O positions. Besides its role in RNA genome replication, also prevents the establishment of cellular antiviral state by blocking the interferon-alpha/beta (IFN-alpha/beta) signaling pathway. Inhibits host TYK2 and STAT2 phosphorylation, thereby preventing activation of JAK-STAT signaling pathway. This is Genome polyprotein from Japanese encephalitis virus (strain SA-14) (JEV).